Reading from the N-terminus, the 803-residue chain is PR domain zinc finger protein 4 (803 aa).

The region spanning 408–532 (KQLVLRQSIV…PESELLFYYS (125 aa)) is the SET domain. 5 C2H2-type zinc fingers span residues 593-615 (WKCSMCPQAFISPSKLHVHFMGH), 621-643 (HKCDFCSKAFSDPSNLRTHLKIH), 649-671 (YRCTLCDKSFTQKAHLESHMVIH), 677-699 (LKCDYCDKLFMRRQDLKQHVLIH), and 705-727 (IKCPKCDKLFLRTNHLKKHLNSH). The segment at 733 to 755 (YVCEKCTKAYLTKYHLTRHLKTC) adopts a C2H2-type 6; degenerate zinc-finger fold. The interval 757-803 (EPSSSSSAQEEEDDESEEEDLADSMRTEDCRMGSAVYSTDESLSAHK) is disordered. The segment covering 765–778 (QEEEDDESEEEDLA) has biased composition (acidic residues). A compositionally biased stretch (polar residues) spans 792–803 (VYSTDESLSAHK).

It belongs to the class V-like SAM-binding methyltransferase superfamily.

It localises to the nucleus. Its function is as follows. May function as a transcription factor involved in cell differentiation. In Mus musculus (Mouse), this protein is PR domain zinc finger protein 4 (Prdm4).